The following is a 475-amino-acid chain: 3-hydroxyadipyl-CoA dehydrogenase (475 aa).

It belongs to the 3-hydroxyacyl-CoA dehydrogenase family. Homotrimer.

The catalysed reaction is (3S)-3-hydroxyadipyl-CoA + NAD(+) = 3-oxoadipyl-CoA + NADH + H(+). It functions in the pathway aromatic compound metabolism; phenylacetate degradation. Its function is as follows. Catalyzes the oxidation of 3-hydroxyadipyl-CoA to yield 3-oxoadipyl-CoA. In Escherichia coli (strain K12), this protein is 3-hydroxyadipyl-CoA dehydrogenase (paaH).